Consider the following 36-residue polypeptide: Protein usd (36 aa).

In terms of biological role, required for translation of SpoIIID. The protein is Protein usd (usd) of Bacillus subtilis (strain 168).